Here is a 504-residue protein sequence, read N- to C-terminus: ATP synthase subunit alpha (504 aa).

169 to 176 is a binding site for ATP; it reads GDRQTGKT.

Belongs to the ATPase alpha/beta chains family. In terms of assembly, F-type ATPases have 2 components, CF(1) - the catalytic core - and CF(0) - the membrane proton channel. CF(1) has five subunits: alpha(3), beta(3), gamma(1), delta(1), epsilon(1). CF(0) has three main subunits: a(1), b(2) and c(9-12). The alpha and beta chains form an alternating ring which encloses part of the gamma chain. CF(1) is attached to CF(0) by a central stalk formed by the gamma and epsilon chains, while a peripheral stalk is formed by the delta and b chains.

It is found in the cell membrane. It catalyses the reaction ATP + H2O + 4 H(+)(in) = ADP + phosphate + 5 H(+)(out). Functionally, produces ATP from ADP in the presence of a proton gradient across the membrane. The alpha chain is a regulatory subunit. In Clostridium botulinum (strain Loch Maree / Type A3), this protein is ATP synthase subunit alpha.